Consider the following 1022-residue polypeptide: Sodium/potassium-transporting ATPase subunit alpha (1022 aa).

The propeptide occupies 1–5; the sequence is MGKGA. Residues 1–34 form a disordered region; the sequence is MGKGAASEKYQPAATSENAKNSKKSKSKTTDLDE. Over 6 to 87 the chain is Cytoplasmic; it reads ASEKYQPAAT…NALTPPPTTP (82 aa). Ser16 is modified (phosphoserine; by PKC). The interval 82 to 84 is interaction with phosphoinositide-3 kinase; the sequence is PPP. Residues 88-108 form a helical membrane-spanning segment; the sequence is EWIKFCRQLFGGFSILLWTGA. The Lumenal segment spans residues 109-131; that stretch reads ILCFLAYGIQVATVDNPANDNLY. Residues 132-152 traverse the membrane as a helical segment; the sequence is LGVVLSTVVIITGCFSYYQEA. At 153–288 the chain is on the cytoplasmic side; sequence KSSKIMDSFK…VGQTPIAAEI (136 aa). Positions 215 to 235 are disordered; it reads NSSLTGESEPQSRSPEYSSEN. The chain crosses the membrane as a helical span at residues 289–308; the sequence is EHFIHIITGVAVFLGVSFFI. Over 309-320 the chain is Lumenal; that stretch reads LSLILGYTWLEA. Residues 321-338 form a helical membrane-spanning segment; that stretch reads VIFLIGIIVANVPEGLLA. Topologically, residues 339 to 771 are cytoplasmic; the sequence is TVTVCLTLTA…EEGRLIFDNL (433 aa). The active-site 4-aspartylphosphate intermediate is the Asp376. Positions 716 and 720 each coordinate Mg(2+). The helical transmembrane segment at 772–791 threads the bilayer; the sequence is KKSIAYTLTSNIPEITPFLV. Residues 792-801 are Lumenal-facing; that stretch reads FIIANVPLPL. Residues 802-822 form a helical membrane-spanning segment; sequence GTVTILCIDLGTDMVPAISLA. The Cytoplasmic segment spans residues 823–842; that stretch reads YERAESDIMKRQPRNPKTDK. A helical membrane pass occupies residues 843–865; the sequence is LVNERLISMAYGQIGMIQALGGF. Topologically, residues 866-917 are lumenal; it reads FSYFVILAENGFLPIDLIGIREKWDELWTQDLEDSYGQQWTYEQRKIVEYTC. The helical transmembrane segment at 918–937 threads the bilayer; that stretch reads HTSFFVSIVIVQWADLIICK. The Cytoplasmic portion of the chain corresponds to 938 to 950; sequence TRRNSIFQQGMKN. Position 942 is a phosphoserine; by PKA (Ser942). A helical transmembrane segment spans residues 951–969; sequence KILIFGLFEETALAAFLSY. Residues 970–984 lie on the Lumenal side of the membrane; the sequence is TPGTDIALRMYPLKP. The chain crosses the membrane as a helical span at residues 985–1005; that stretch reads SWWFCAFPYSLIIFLYDEARR. Residues 1006-1022 are Cytoplasmic-facing; it reads FILRRNPGGWVEQETYY.

This sequence belongs to the cation transport ATPase (P-type) (TC 3.A.3) family. Type IIC subfamily. In terms of assembly, the sodium/potassium-transporting ATPase is composed of a catalytic alpha subunit, an auxiliary non-catalytic beta subunit and an additional regulatory subunit.

The protein localises to the cell membrane. The catalysed reaction is K(+)(out) + Na(+)(in) + ATP + H2O = K(+)(in) + Na(+)(out) + ADP + phosphate + H(+). This is the catalytic component of the active enzyme, which catalyzes the hydrolysis of ATP coupled with the exchange of sodium and potassium ions across the plasma membrane. This action creates the electrochemical gradient of sodium and potassium ions, providing the energy for active transport of various nutrients. The chain is Sodium/potassium-transporting ATPase subunit alpha from Tetronarce californica (Pacific electric ray).